Here is a 147-residue protein sequence, read N- to C-terminus: Hemoglobin subunit beta (147 aa).

The Globin domain occupies 2–147; the sequence is HWEDAEKQYI…ISHSLGREYH (146 aa). The heme b site is built by His-63 and His-92.

This sequence belongs to the globin family. Heterotetramer of two alpha chains and two beta chains. Red blood cells.

Involved in oxygen transport from the lung to the various peripheral tissues. The sequence is that of Hemoglobin subunit beta (HBB) from Lepidosiren paradoxus (South American lungfish).